The sequence spans 291 residues: Bifunctional protein FolD (291 aa).

Residues 173 to 175 (GRS) and Ser-198 each bind NADP(+).

It belongs to the tetrahydrofolate dehydrogenase/cyclohydrolase family. As to quaternary structure, homodimer.

It catalyses the reaction (6R)-5,10-methylene-5,6,7,8-tetrahydrofolate + NADP(+) = (6R)-5,10-methenyltetrahydrofolate + NADPH. The catalysed reaction is (6R)-5,10-methenyltetrahydrofolate + H2O = (6R)-10-formyltetrahydrofolate + H(+). Its pathway is one-carbon metabolism; tetrahydrofolate interconversion. Functionally, catalyzes the oxidation of 5,10-methylenetetrahydrofolate to 5,10-methenyltetrahydrofolate and then the hydrolysis of 5,10-methenyltetrahydrofolate to 10-formyltetrahydrofolate. The polypeptide is Bifunctional protein FolD (Psychrobacter sp. (strain PRwf-1)).